A 272-amino-acid chain; its full sequence is NH(3)-dependent NAD(+) synthetase (272 aa).

An ATP-binding site is contributed by 45-52 (GISGGQDS). Asp-51 contributes to the Mg(2+) binding site. Arg-138 provides a ligand contact to deamido-NAD(+). Position 158 (Thr-158) interacts with ATP. Glu-163 contributes to the Mg(2+) binding site. Positions 171 and 178 each coordinate deamido-NAD(+). Positions 187 and 209 each coordinate ATP. 258-259 (HK) contributes to the deamido-NAD(+) binding site.

It belongs to the NAD synthetase family. In terms of assembly, homodimer.

It catalyses the reaction deamido-NAD(+) + NH4(+) + ATP = AMP + diphosphate + NAD(+) + H(+). The protein operates within cofactor biosynthesis; NAD(+) biosynthesis; NAD(+) from deamido-NAD(+) (ammonia route): step 1/1. In terms of biological role, catalyzes the ATP-dependent amidation of deamido-NAD to form NAD. Uses ammonia as a nitrogen source. The sequence is that of NH(3)-dependent NAD(+) synthetase from Bacillus cereus (strain ATCC 10987 / NRS 248).